Here is a 314-residue protein sequence, read N- to C-terminus: tRNA pseudouridine synthase B (314 aa).

H43 serves as a coordination point for substrate. D48 serves as the catalytic Nucleophile. Substrate contacts are provided by Y76, Y179, and L200.

This sequence belongs to the pseudouridine synthase TruB family. Type 1 subfamily.

It carries out the reaction uridine(55) in tRNA = pseudouridine(55) in tRNA. In terms of biological role, responsible for synthesis of pseudouridine from uracil-55 in the psi GC loop of transfer RNAs. The chain is tRNA pseudouridine synthase B from Salmonella arizonae (strain ATCC BAA-731 / CDC346-86 / RSK2980).